A 141-amino-acid polypeptide reads, in one-letter code: Anthrone oxygenase ptaC (141 aa).

Positions 1 to 19 (MMGLPLMAVPMLLDTGADP) are cleaved as a signal peptide. 2 helical membrane passes run 33-53 (GVRT…WTII) and 64-84 (ILAV…YVLA).

Belongs to the anthrone oxygenase family.

It localises to the membrane. It functions in the pathway secondary metabolite biosynthesis. In terms of biological role, anthrone oxygenase; part of the gene cluster that mediates the biosynthesis of pestheic acid, a diphenyl ether which is a biosynthetic precursor of the unique chloropupukeananes. The biosynthesis initiates from condensation of acetate and malonate units catalyzed by the non-reducing PKS ptaA. As the ptaA protein is TE/CLC domain-deficient, hydrolysis and Claisen cyclization of the polyketide could be catalyzed by ptaB containing a beta-lactamase domain. The ptaB protein might hydrolyze the thioester bond between the ACP of ptaA and the intermediate to release atrochrysone carboxylic acid, which is spontaneously dehydrated to form endocrocin anthrone. Endocrocin anthrone is then converted to endocrocin, catalyzed by the anthrone oxygenase ptaC. Spontaneous decarboxylation of endocrocin occurs to generate emodin. An O-methyltransferase (ptaH or ptaI) could methylate emodin to form physcion. PtaJ could then catalyze the oxidative cleavage of physcion, and rotation of the intermediate could then afford desmethylisosulochrin. PtaF, a putative NADH-dependent oxidoreductase, might also participate in the oxidative cleavage step. Desmethylisosulochrin is then transformed by another O-methyltransferase (ptaH or ptaI) to form isosulochrin. Chlorination of isosulochrin by ptaM in the cyclohexadienone B ring then produces chloroisosulochrin. PtaE is responsible for the oxidative coupling reactions of both benzophenones isosulochrin and chloroisosulochrin to RES-1214-1 and pestheic acid respectively, regardless of chlorination. This Pestalotiopsis fici (strain W106-1 / CGMCC3.15140) protein is Anthrone oxygenase ptaC.